The chain runs to 100 residues: Urease subunit gamma (100 aa).

This sequence belongs to the urease gamma subunit family. As to quaternary structure, heterotrimer of UreA (gamma), UreB (beta) and UreC (alpha) subunits. Three heterotrimers associate to form the active enzyme.

Its subcellular location is the cytoplasm. It carries out the reaction urea + 2 H2O + H(+) = hydrogencarbonate + 2 NH4(+). It participates in nitrogen metabolism; urea degradation; CO(2) and NH(3) from urea (urease route): step 1/1. This chain is Urease subunit gamma, found in Kocuria rhizophila (strain ATCC 9341 / DSM 348 / NBRC 103217 / DC2201).